A 361-amino-acid polypeptide reads, in one-letter code: Cyclin-dependent kinase 10 (361 aa).

The region spanning 37-321 (FEKLNRIGEG…AGDCLESSYF (285 aa)) is the Protein kinase domain. ATP is bound by residues 43–51 (IGEGTYGIV) and Lys66. Asp161 serves as the catalytic Proton acceptor. Thr194 carries the post-translational modification Phosphothreonine. Residues 332–361 (LMPTFPHHRNKRATPATSLGTESQSRRGRP) are disordered.

Belongs to the protein kinase superfamily. CMGC Ser/Thr protein kinase family. CDC2/CDKX subfamily. Heterodimer with CCNQ, the interaction is required for kinase activity. Interacts with ETS2. Interacts with PRK2.

The protein localises to the cytoplasm. The protein resides in the cytoskeleton. It localises to the cilium basal body. It carries out the reaction L-seryl-[protein] + ATP = O-phospho-L-seryl-[protein] + ADP + H(+). It catalyses the reaction L-threonyl-[protein] + ATP = O-phospho-L-threonyl-[protein] + ADP + H(+). Its function is as follows. Cyclin-dependent kinase that phosphorylates the transcription factor ETS2 (in vitro) and positively controls its proteasomal degradation (in cells). Involved in the regulation of actin cytoskeleton organization through the phosphorylation of actin dynamics regulators such as PKN2. Is a negative regulator of ciliogenesis through phosphorylation of PKN2 and promotion of RhoA signaling. The polypeptide is Cyclin-dependent kinase 10 (CDK10) (Bos taurus (Bovine)).